The sequence spans 284 residues: 2-dehydro-3-deoxyphosphooctonate aldolase (284 aa).

This sequence belongs to the KdsA family.

It localises to the cytoplasm. It carries out the reaction D-arabinose 5-phosphate + phosphoenolpyruvate + H2O = 3-deoxy-alpha-D-manno-2-octulosonate-8-phosphate + phosphate. It participates in carbohydrate biosynthesis; 3-deoxy-D-manno-octulosonate biosynthesis; 3-deoxy-D-manno-octulosonate from D-ribulose 5-phosphate: step 2/3. It functions in the pathway bacterial outer membrane biogenesis; lipopolysaccharide biosynthesis. The sequence is that of 2-dehydro-3-deoxyphosphooctonate aldolase from Actinobacillus pleuropneumoniae serotype 7 (strain AP76).